We begin with the raw amino-acid sequence, 416 residues long: Exodeoxyribonuclease 7 large subunit (416 aa).

The protein belongs to the XseA family. In terms of assembly, heterooligomer composed of large and small subunits.

Its subcellular location is the cytoplasm. It carries out the reaction Exonucleolytic cleavage in either 5'- to 3'- or 3'- to 5'-direction to yield nucleoside 5'-phosphates.. Functionally, bidirectionally degrades single-stranded DNA into large acid-insoluble oligonucleotides, which are then degraded further into small acid-soluble oligonucleotides. The protein is Exodeoxyribonuclease 7 large subunit of Acidothermus cellulolyticus (strain ATCC 43068 / DSM 8971 / 11B).